Here is a 952-residue protein sequence, read N- to C-terminus: Calsyntenin-1 (952 aa).

An N-terminal signal peptide occupies residues Met1–Ala28. Residues Ala29–Thr830 are Extracellular-facing. Cadherin domains follow at residues Leu38 to Phe154 and Lys155 to Trp255. Asn356 is a glycosylation site (N-linked (GlcNAc...) asparagine). The chain crosses the membrane as a helical span at residues Ala831–Phe851. Over Arg852–Tyr952 the chain is Cytoplasmic. Residues Met886–Tyr952 form a disordered region. Residues Glu896–Gly930 are compositionally biased toward acidic residues. Residues Gly934 to Tyr952 are compositionally biased toward polar residues.

Belongs to the calsyntenin family. As to quaternary structure, directly interacts with APBA2. Forms a tripartite complex with APBA2 and APP. Interacts with KLC1. In terms of assembly, interacts with APBB1; this interaction stabilizes AlcICD metabolism. Interacts with PSEN1. Proteolytically processed under normal cellular conditions. A primary zeta-cleavage generates a large extracellular (soluble) N-terminal domain (sAlc) and a short C-terminal transmembrane fragment (CTF1). A secondary cleavage catalyzed by presenilin gamma-secretase within the transmembrane domain releases the beta-Alc-alpha chain in the extracellular milieu and produces an intracellular fragment (AlcICD). This processing is strongly suppressed in the tripartite complex formed with APBA2 and APP, which seems to prevent the association with PSEN1. Preferentially expressed in the retina and brain.

It localises to the postsynaptic cell membrane. The protein localises to the endoplasmic reticulum membrane. Its subcellular location is the golgi apparatus membrane. The protein resides in the cell projection. It is found in the neuron projection. It localises to the nucleus. Functionally, postsynaptic adhesion molecule that binds to presynaptic neurexins to mediate both excitatory and inhibitory synapse formation. Promotes synapse development by acting as a cell adhesion molecule at the postsynaptic membrane, which associates with neurexin-alpha at the presynaptic membrane. Also functions as a cargo in axonal anterograde transport by acting as a molecular adapter that promotes KLC1 association with vesicles. Complex formation with APBA2 and APP, stabilizes APP metabolism and enhances APBA2-mediated suppression of beta-APP40 secretion, due to the retardation of intracellular APP maturation. As intracellular fragment AlcICD, suppresses APBB1-dependent transactivation stimulated by APP C-terminal intracellular fragment (AICD), most probably by competing with AICD for APBB1-binding. In terms of biological role, in complex with APBA2 and C99, a C-terminal APP fragment, abolishes C99 interaction with PSEN1 and thus APP C99 cleavage by gamma-secretase, most probably through stabilization of the direct interaction between APBA2 and APP. The protein is Calsyntenin-1 (Clstn1) of Rattus norvegicus (Rat).